Here is a 77-residue protein sequence, read N- to C-terminus: Defensin-B6 (77 aa).

The first 20 residues, Met1–Gly20, serve as a signal peptide directing secretion. 3 cysteine pairs are disulfide-bonded: Cys43/Cys70, Cys50/Cys64, and Cys54/Cys71.

The protein belongs to the beta-defensin family. As to expression, lowly expressed in spleen, kidney and lung.

It localises to the secreted. Functionally, has antimicrobial activity. The protein is Defensin-B6 of Ornithorhynchus anatinus (Duckbill platypus).